The following is a 486-amino-acid chain: MKINIILLFVGLILAFAVLSNAISIKNDGGVNPFDNNNSGSGSGSGSGGGSSSSGSGTGQSSGTVSSSGSASNNTSSGSQSGNASSGSSSGSSSGSSSGSSSGSSSGSQSGNASSGSSSSGSSGSQSGNASSGTSSGSSSSSGSSQSGNASSGPSSGTTSSSGSSQSESSQSGNASSGPSSGTTSSSGSSQSESSQSESSQSGSASSGPSSGTTSSSGSSQSDSSSFTTTGSQGSSGSSGSSQSDSSSFTTTGSGSGSSQDSMSGSDSMSGSDSMSGSDSMSGSSFTGGNSGGSTSTGSGSYSGNPSLTGSSEYSSSSSGGGSGSHGGSSSHPNGWTDVGQFLLGLAEGLVSTVASNTKLCFQSVGSSITDFENAFQLIDSGFSRLSKPLIEQGLMDLGSGLLEVAIAFETCNVQNLASEIKALATNIESGELGILEVIVKETINIFHNGNQLTTEFKLTISDYKSQNYLGMGYNIGGIVGILLKD.

The signal sequence occupies residues 1 to 22; sequence MKINIILLFVGLILAFAVLSNA. Residues 30–332 are disordered; it reads GVNPFDNNNS…SGSHGGSSSH (303 aa). N-linked (GlcNAc...) asparagine glycosylation is present at asparagine 37. The segment covering 41-60 has biased composition (gly residues); it reads SGSGSGSGGGSSSSGSGTGQ. Over residues 61-318 the composition is skewed to low complexity; it reads SSGTVSSSGS…TGSSEYSSSS (258 aa). Asparagine 73, asparagine 74, asparagine 83, asparagine 112, asparagine 129, asparagine 149, and asparagine 174 each carry an N-linked (GlcNAc...) asparagine glycan.

This sequence belongs to the Sct family.

Its subcellular location is the secreted. The sequence is that of Secreted protein C from Dictyostelium discoideum (Social amoeba).